The sequence spans 350 residues: Arabinogalactan endo-beta-1,4-galactanase (350 aa).

The signal sequence occupies residues 1-16 (MFASLLLAALPLLTHA). An N-linked (GlcNAc...) asparagine glycan is attached at asparagine 128. Glutamate 152 (proton donor) is an active-site residue. Residue glutamate 262 is the Nucleophile of the active site.

Belongs to the glycosyl hydrolase 53 family. Post-translationally, glycosylated.

It carries out the reaction The enzyme specifically hydrolyzes (1-&gt;4)-beta-D-galactosidic linkages in type I arabinogalactans.. The chain is Arabinogalactan endo-beta-1,4-galactanase (gal1) from Aspergillus aculeatus.